The following is a 943-amino-acid chain: Protein translocase subunit SecA (943 aa).

Residues Gln90, 108–112, and Asp509 each bind ATP; that span reads GEGKT. Positions 537–556 are disordered; it reads NEHKPPIPKQRSSKSKGGFS.

This sequence belongs to the SecA family. As to quaternary structure, monomer and homodimer. Part of the essential Sec protein translocation apparatus which comprises SecA, SecYEG and auxiliary proteins SecDF. Other proteins may also be involved.

The protein localises to the cell inner membrane. It localises to the cellular thylakoid membrane. It is found in the cytoplasm. The catalysed reaction is ATP + H2O + cellular proteinSide 1 = ADP + phosphate + cellular proteinSide 2.. Its function is as follows. Part of the Sec protein translocase complex. Interacts with the SecYEG preprotein conducting channel. Has a central role in coupling the hydrolysis of ATP to the transfer of proteins into and across the cell membrane, serving as an ATP-driven molecular motor driving the stepwise translocation of polypeptide chains across the membrane. Probably participates in protein translocation into and across both the cytoplasmic and thylakoid membranes in cyanobacterial cells. The chain is Protein translocase subunit SecA from Prochlorococcus marinus (strain MIT 9301).